Consider the following 39-residue polypeptide: Photosystem II reaction center protein L (39 aa).

The chain crosses the membrane as a helical span at residues 18 to 38 (SLYLGLLLVAVLGILFSSYFF).

It belongs to the PsbL family. PSII is composed of 1 copy each of membrane proteins PsbA, PsbB, PsbC, PsbD, PsbE, PsbF, PsbH, PsbI, PsbJ, PsbK, PsbL, PsbM, PsbT, PsbX, PsbY, PsbZ, Psb30/Ycf12, peripheral proteins PsbO, CyanoQ (PsbQ), PsbU, PsbV and a large number of cofactors. It forms dimeric complexes.

It is found in the cellular thylakoid membrane. One of the components of the core complex of photosystem II (PSII). PSII is a light-driven water:plastoquinone oxidoreductase that uses light energy to abstract electrons from H(2)O, generating O(2) and a proton gradient subsequently used for ATP formation. It consists of a core antenna complex that captures photons, and an electron transfer chain that converts photonic excitation into a charge separation. This subunit is found at the monomer-monomer interface and is required for correct PSII assembly and/or dimerization. This chain is Photosystem II reaction center protein L, found in Microcystis aeruginosa (strain NIES-843 / IAM M-2473).